Reading from the N-terminus, the 129-residue chain is Phosphoribosyl-AMP cyclohydrolase (129 aa).

Position 82 (Asp82) interacts with Mg(2+). Zn(2+) is bound at residue Cys83. Mg(2+)-binding residues include Asp84 and Asp86. 2 residues coordinate Zn(2+): Cys99 and Cys106.

Belongs to the PRA-CH family. As to quaternary structure, homodimer. Requires Mg(2+) as cofactor. It depends on Zn(2+) as a cofactor.

The protein resides in the cytoplasm. It catalyses the reaction 1-(5-phospho-beta-D-ribosyl)-5'-AMP + H2O = 1-(5-phospho-beta-D-ribosyl)-5-[(5-phospho-beta-D-ribosylamino)methylideneamino]imidazole-4-carboxamide. It participates in amino-acid biosynthesis; L-histidine biosynthesis; L-histidine from 5-phospho-alpha-D-ribose 1-diphosphate: step 3/9. Its function is as follows. Catalyzes the hydrolysis of the adenine ring of phosphoribosyl-AMP. The protein is Phosphoribosyl-AMP cyclohydrolase of Methanosarcina barkeri (strain Fusaro / DSM 804).